The chain runs to 343 residues: Flap endonuclease 1 (343 aa).

Residues 1-98 (MGVPIGELIP…KELEKRREAR (98 aa)) are N-domain. The Mg(2+) site is built by aspartate 27, aspartate 80, glutamate 152, glutamate 154, aspartate 173, aspartate 175, and aspartate 236. The I-domain stretch occupies residues 116–258 (EARKYAQRAT…KALEIVKYSK (143 aa)). Residues 330-338 (KQSTLESWF) are interaction with PCNA.

The protein belongs to the XPG/RAD2 endonuclease family. FEN1 subfamily. As to quaternary structure, interacts with PCNA. PCNA stimulates the nuclease activity without altering cleavage specificity. Mg(2+) serves as cofactor.

Structure-specific nuclease with 5'-flap endonuclease and 5'-3' exonuclease activities involved in DNA replication and repair. During DNA replication, cleaves the 5'-overhanging flap structure that is generated by displacement synthesis when DNA polymerase encounters the 5'-end of a downstream Okazaki fragment. Binds the unpaired 3'-DNA end and kinks the DNA to facilitate 5' cleavage specificity. Cleaves one nucleotide into the double-stranded DNA from the junction in flap DNA, leaving a nick for ligation. Also involved in the base excision repair (BER) pathway. Acts as a genome stabilization factor that prevents flaps from equilibrating into structures that lead to duplications and deletions. Also possesses 5'-3' exonuclease activity on nicked or gapped double-stranded DNA. In Pyrococcus abyssi (strain GE5 / Orsay), this protein is Flap endonuclease 1.